We begin with the raw amino-acid sequence, 495 residues long: Phage-like element PBSX protein XkdE (495 aa).

The protein belongs to the phage portal family. PBSX subfamily.

The chain is Phage-like element PBSX protein XkdE (xkdE) from Bacillus subtilis (strain 168).